Reading from the N-terminus, the 385-residue chain is O-phospho-L-seryl-tRNA:Cys-tRNA synthase (385 aa).

Residues 89–90, asparagine 195, and 218–220 contribute to the pyridoxal 5'-phosphate site; these read AR and SGH. Lysine 221 is modified (N6-(pyridoxal phosphate)lysine).

The protein belongs to the SepCysS family. In terms of assembly, homodimer. Interacts with SepRS. Pyridoxal 5'-phosphate serves as cofactor.

The catalysed reaction is O-phospho-L-seryl-tRNA(Cys) + hydrogen sulfide + H(+) = L-cysteinyl-tRNA(Cys) + phosphate. In terms of biological role, converts O-phospho-L-seryl-tRNA(Cys) (Sep-tRNA(Cys)) to L-cysteinyl-tRNA(Cys) (Cys-tRNA(Cys)). The polypeptide is O-phospho-L-seryl-tRNA:Cys-tRNA synthase (Methanococcus aeolicus (strain ATCC BAA-1280 / DSM 17508 / OCM 812 / Nankai-3)).